The chain runs to 197 residues: Carbohydrate-binding domain-containing protein C2E1P3.05c (197 aa).

The signal sequence occupies residues 1–23 (MLTQSLFLTVLTLALSLVSKTSA). CBM1 domains lie at 25-61 (QCSP…SQCI) and 68-104 (PCAK…SQCI). 4 cysteine pairs are disulfide-bonded: Cys-33–Cys-50, Cys-44–Cys-60, Cys-76–Cys-93, and Cys-87–Cys-103. Positions 115-163 (SSAASSTTSTTSSSSLVSSTTLTSSSPSAVSSTTSIPSISSTISSSVST) are disordered. N-linked (GlcNAc...) asparagine glycans are attached at residues Asn-182 and Asn-193.

The protein resides in the secreted. The sequence is that of Carbohydrate-binding domain-containing protein C2E1P3.05c from Schizosaccharomyces pombe (strain 972 / ATCC 24843) (Fission yeast).